The sequence spans 171 residues: Secreted protein CSS3 (171 aa).

Residues 1-20 (MVPLFGLFCIFSQLYSLCSA) form the signal peptide. Residues Asn-37, Asn-139, and Asn-159 are each glycosylated (N-linked (GlcNAc...) asparagine).

The protein resides in the cytoplasm. The protein localises to the secreted. This chain is Secreted protein CSS3, found in Saccharomyces cerevisiae (strain ATCC 204508 / S288c) (Baker's yeast).